A 415-amino-acid polypeptide reads, in one-letter code: Mechanosensing system component YbdG (415 aa).

At 1–24 the chain is on the periplasmic side; sequence MQDLISQVEDLAGIEIDHTTSMVM. The helical transmembrane segment at 25–45 threads the bilayer; that stretch reads IFGIIFLTAVVVHIILHWVVL. Topologically, residues 46–67 are cytoplasmic; it reads RTFEKRAIASSRLWLQIITQNK. The chain crosses the membrane as a helical span at residues 68–88; the sequence is LFHRLAFTLQGIIVNIQAVFW. At 89–104 the chain is on the periplasmic side; the sequence is LQKGTEAADILTTCAQ. The chain crosses the membrane as a helical span at residues 105–125; it reads LWIMMYALLSVFSLLDVILNL. At 126 to 148 the chain is on the cytoplasmic side; sequence AQKFPAASQLPLKGIFQGIKLIG. The chain crosses the membrane as a helical span at residues 149-169; sequence AILVGILMISLLIGQSPAILI. The Periplasmic portion of the chain corresponds to 170-173; the sequence is SGLG. Residues 174 to 194 form a helical membrane-spanning segment; it reads AMAAVLMLVFKDPILGLVAGI. Residues 195–415 are Cytoplasmic-facing; sequence QLSANDMLKL…IRSLAGAFKQ (221 aa).

The protein belongs to the MscS (TC 1.A.23) family. Homoheptamer.

It is found in the cell inner membrane. Functions as a component of a mechanosensing system that transmits signals triggered by external osmotic changes to intracellular factors. The sequence is that of Mechanosensing system component YbdG (ybdG) from Shigella flexneri.